The sequence spans 474 residues: Cbb3-type cytochrome c oxidase subunit CcoN1 (474 aa).

Residues 1-16 lie on the Cytoplasmic side of the membrane; it reads MNTATSTAYSYKVVRQ. A helical membrane pass occupies residues 17-37; it reads FAIMTVVWGIVGMGLGVFIAA. At 38–60 the chain is on the periplasmic side; it reads QLAWPFLNFDLPWTSFGRLRPLH. His-60 is a binding site for heme b. Residues 61–81 traverse the membrane as a helical segment; sequence TNAVIFAFGGCALFATSYYSV. At 82–96 the chain is on the cytoplasmic side; it reads QRTCQTTLFAPKLAA. A helical transmembrane segment spans residues 97-117; the sequence is FTFWGWQLVILLAAISLPLGF. The Periplasmic portion of the chain corresponds to 118–129; it reads TSSKEYAELEWP. Residues 130 to 150 form a helical membrane-spanning segment; that stretch reads IDILITIVWVAYAVVFFGTLA. The Cytoplasmic portion of the chain corresponds to 151–156; it reads KRKVKH. A helical membrane pass occupies residues 157 to 177; sequence IYVGNWFFGAFILTVAILHVV. At 178–205 the chain is on the periplasmic side; the sequence is NNLEIPVTAMKSYSLYAGATDAMVQWWY. The helical transmembrane segment at 206 to 226 threads the bilayer; that stretch reads GHNAVGFFLTAGFLGIMYYFV. His-207 serves as a coordination point for Cu cation. Residues 227 to 238 are Cytoplasmic-facing; sequence PKQAERPVYSYR. A helical membrane pass occupies residues 239–259; that stretch reads LSIVHFWALITVYIWAGPHHL. Cu cation-binding residues include His-257 and His-258. Topologically, residues 260-270 are periplasmic; sequence HYTALPDWAQS. Residues 271-291 traverse the membrane as a helical segment; the sequence is LGMVMSLILLAPSWGGMINGM. Over 292 to 308 the chain is Cytoplasmic; the sequence is MTLSGAWHKLRSDPILR. The helical transmembrane segment at 309-329 threads the bilayer; it reads FLVVSLAFYGMSTFEGPMMAI. Residues 330 to 345 are Periplasmic-facing; that stretch reads KTVNALSHYTDWTIGH. Residues His-345 and His-347 each contribute to the heme b site. Residues 346–366 traverse the membrane as a helical segment; that stretch reads VHAGALGWVAMVSIGALYHLV. Over 367–384 the chain is Cytoplasmic; it reads PKVFGREQMHSIGLINTH. A helical membrane pass occupies residues 385 to 405; sequence FWLATIGTVLYIASMWVNGIA. Topologically, residues 406-432 are periplasmic; that stretch reads QGLMWRAINDDGTLTYSFVESLEASHP. Residues 433-453 form a helical membrane-spanning segment; that stretch reads GFVVRMIGGAIFFAGMLVMAY. Topologically, residues 454–474 are cytoplasmic; that stretch reads NTWRTVQAAKPAEYDAAAQIA.

Belongs to the heme-copper respiratory oxidase family. As to quaternary structure, component of the cbb3-type cytochrome c oxidase at least composed of CcoN, CcoO, CcoQ and CcoP. Requires Cu(2+) as cofactor. The cofactor is heme b.

It localises to the cell inner membrane. It catalyses the reaction 4 Fe(II)-[cytochrome c] + O2 + 8 H(+)(in) = 4 Fe(III)-[cytochrome c] + 2 H2O + 4 H(+)(out). It functions in the pathway energy metabolism; oxidative phosphorylation. Its function is as follows. Cbb3-type cytochrome c oxidase is the component of the respiratory chain that catalyzes the reduction of oxygen to water. Subunits CcoN and CcoO form the functional core of the enzyme complex. Subunits CcoP and CcoQ may optionally bind to the core. CcoN is the catalytic subunit of the enzyme. Electrons originating in cytochrome c or a quinol are transferred to the bimetallic center formed by a high-spin heme and copper B. The complex also functions as a proton pump. The chain is Cbb3-type cytochrome c oxidase subunit CcoN1 from Stutzerimonas stutzeri (Pseudomonas stutzeri).